Here is a 446-residue protein sequence, read N- to C-terminus: 3-phosphoshikimate 1-carboxyvinyltransferase (446 aa).

3-phosphoshikimate-binding residues include lysine 21, serine 22, and arginine 26. Position 21 (lysine 21) interacts with phosphoenolpyruvate. The phosphoenolpyruvate site is built by glycine 92 and arginine 120. Serine 165, glutamine 166, aspartate 308, and lysine 335 together coordinate 3-phosphoshikimate. Glutamine 166 contacts phosphoenolpyruvate. Aspartate 308 functions as the Proton acceptor in the catalytic mechanism. Arginine 339, arginine 380, and lysine 406 together coordinate phosphoenolpyruvate.

It belongs to the EPSP synthase family. In terms of assembly, monomer.

Its subcellular location is the cytoplasm. It carries out the reaction 3-phosphoshikimate + phosphoenolpyruvate = 5-O-(1-carboxyvinyl)-3-phosphoshikimate + phosphate. Its pathway is metabolic intermediate biosynthesis; chorismate biosynthesis; chorismate from D-erythrose 4-phosphate and phosphoenolpyruvate: step 6/7. In terms of biological role, catalyzes the transfer of the enolpyruvyl moiety of phosphoenolpyruvate (PEP) to the 5-hydroxyl of shikimate-3-phosphate (S3P) to produce enolpyruvyl shikimate-3-phosphate and inorganic phosphate. This Chlamydia caviae (strain ATCC VR-813 / DSM 19441 / 03DC25 / GPIC) (Chlamydophila caviae) protein is 3-phosphoshikimate 1-carboxyvinyltransferase.